A 430-amino-acid chain; its full sequence is Citrate synthase (430 aa).

Catalysis depends on residues H305 and D363.

The protein belongs to the citrate synthase family. Homohexamer.

It carries out the reaction oxaloacetate + acetyl-CoA + H2O = citrate + CoA + H(+). It participates in carbohydrate metabolism; tricarboxylic acid cycle; isocitrate from oxaloacetate: step 1/2. With respect to regulation, allosterically inhibited by NADH. This is Citrate synthase (gltA) from Coxiella burnetii (strain RSA 493 / Nine Mile phase I).